The primary structure comprises 424 residues: Serine--tRNA ligase (424 aa).

Residue 232-234 (TAE) participates in L-serine binding. Residue 263–265 (RKE) coordinates ATP. Glutamate 286 serves as a coordination point for L-serine. 350 to 353 (EISS) contacts ATP. Serine 386 lines the L-serine pocket.

This sequence belongs to the class-II aminoacyl-tRNA synthetase family. Type-1 seryl-tRNA synthetase subfamily. Homodimer. The tRNA molecule binds across the dimer.

The protein localises to the cytoplasm. The enzyme catalyses tRNA(Ser) + L-serine + ATP = L-seryl-tRNA(Ser) + AMP + diphosphate + H(+). The catalysed reaction is tRNA(Sec) + L-serine + ATP = L-seryl-tRNA(Sec) + AMP + diphosphate + H(+). It functions in the pathway aminoacyl-tRNA biosynthesis; selenocysteinyl-tRNA(Sec) biosynthesis; L-seryl-tRNA(Sec) from L-serine and tRNA(Sec): step 1/1. In terms of biological role, catalyzes the attachment of serine to tRNA(Ser). Is also able to aminoacylate tRNA(Sec) with serine, to form the misacylated tRNA L-seryl-tRNA(Sec), which will be further converted into selenocysteinyl-tRNA(Sec). The chain is Serine--tRNA ligase from Thermodesulfovibrio yellowstonii (strain ATCC 51303 / DSM 11347 / YP87).